We begin with the raw amino-acid sequence, 312 residues long: Methionyl-tRNA formyltransferase (312 aa).

Position 110 to 113 (110 to 113 (SLLP)) interacts with (6S)-5,6,7,8-tetrahydrofolate.

Belongs to the Fmt family.

It carries out the reaction L-methionyl-tRNA(fMet) + (6R)-10-formyltetrahydrofolate = N-formyl-L-methionyl-tRNA(fMet) + (6S)-5,6,7,8-tetrahydrofolate + H(+). In terms of biological role, attaches a formyl group to the free amino group of methionyl-tRNA(fMet). The formyl group appears to play a dual role in the initiator identity of N-formylmethionyl-tRNA by promoting its recognition by IF2 and preventing the misappropriation of this tRNA by the elongation apparatus. The protein is Methionyl-tRNA formyltransferase of Mycobacterium ulcerans (strain Agy99).